A 188-amino-acid polypeptide reads, in one-letter code: GTP-dependent dephospho-CoA kinase (188 aa).

Residues Asp43, Val44, Asp62, Glu121, and Asp144 each coordinate GTP.

It belongs to the GTP-dependent DPCK family.

The enzyme catalyses 3'-dephospho-CoA + GTP = GDP + CoA + H(+). The protein operates within cofactor biosynthesis; coenzyme A biosynthesis. Catalyzes the GTP-dependent phosphorylation of the 3'-hydroxyl group of dephosphocoenzyme A to form coenzyme A (CoA). The chain is GTP-dependent dephospho-CoA kinase from Methanococcoides burtonii (strain DSM 6242 / NBRC 107633 / OCM 468 / ACE-M).